A 164-amino-acid polypeptide reads, in one-letter code: Envelope glycoprotein L (164 aa).

Residues 1-24 (MRSLDRYAIFILLACGLLWRPCLS) form the signal peptide.

It belongs to the herpesviridae glycoprotein L family. As to quaternary structure, interacts with glycoprotein H (gH); this interaction is necessary for the correct processing and cell surface expression of gH. The heterodimer gH/gL seems to interact with gB trimers during fusion.

The protein resides in the virion membrane. It is found in the host cell membrane. Its subcellular location is the host Golgi apparatus. The protein localises to the host trans-Golgi network. The heterodimer glycoprotein H-glycoprotein L is required for the fusion of viral and plasma membranes leading to virus entry into the host cell. Acts as a functional inhibitor of gH and maintains gH in an inhibited form. Upon binding to host integrins, gL dissociates from gH leading to activation of the viral fusion glycoproteins gB and gH. This chain is Envelope glycoprotein L, found in Equine herpesvirus 2 (strain 86/87) (EHV-2).